The sequence spans 793 residues: DnaJ homolog subfamily C member 10 (793 aa).

The first 32 residues, 1–32 (MGVWLNKDDYIRDLKRIILCFLIVYMAILVGT), serve as a signal peptide directing secretion. In terms of domain architecture, J spans 35-100 (DFYSLLGVSK…DLRKKYDKYG (66 aa)). The Thioredoxin 1 domain occupies 130–232 (EIITLERREF…ESLVSFAMQH (103 aa)). Cys-158 and Cys-161 are disulfide-bonded. 2 trxb regions span residues 235-350 (STVT…LPDF) and 348-463 (PDFE…PQNF). Thioredoxin domains are found at residues 454 to 553 (HVTT…IEDL), 557 to 662 (SVVS…SLRI), and 671 to 778 (VSTD…ISEK). Cys-480 and Cys-483 are oxidised to a cystine. Residue Asn-530 is glycosylated (N-linked (GlcNAc...) asparagine). Intrachain disulfides connect Cys-588–Cys-591 and Cys-700–Cys-703. Positions 790-793 (KDEL) match the Prevents secretion from ER motif.

As to quaternary structure, interacts with EDEM1. Interacts with HSPA5 (via its J domain).

It is found in the endoplasmic reticulum lumen. Endoplasmic reticulum disulfide reductase involved both in the correct folding of proteins and degradation of misfolded proteins. Required for efficient folding of proteins in the endoplasmic reticulum by catalyzing the removal of non-native disulfide bonds formed during the folding of proteins, such as LDLR. Also involved in endoplasmic reticulum-associated degradation (ERAD) by reducing incorrect disulfide bonds in misfolded glycoproteins recognized by EDEM1. Interaction with HSPA5 is required its activity, not for the disulfide reductase activity, but to facilitate the release of DNAJC10 from its substrate. Promotes apoptotic signaling pathway in response to endoplasmic reticulum stress. In Homo sapiens (Human), this protein is DnaJ homolog subfamily C member 10 (DNAJC10).